A 49-amino-acid polypeptide reads, in one-letter code: Large ribosomal subunit protein bL33A (49 aa).

This sequence belongs to the bacterial ribosomal protein bL33 family.

In Geobacillus thermodenitrificans (strain NG80-2), this protein is Large ribosomal subunit protein bL33A.